The chain runs to 316 residues: Olfactory receptor 2T11 (316 aa).

Residues 1–22 lie on the Extracellular side of the membrane; it reads MTNTSSSDFTLLGLLVNSEAAG. Asparagine 3 carries N-linked (GlcNAc...) asparagine glycosylation. The helical transmembrane segment at 23 to 46 threads the bilayer; the sequence is IVFTVILAVFLGAVTANLVMIFLI. At 47–54 the chain is on the cytoplasmic side; that stretch reads QVDSRLHT. The chain crosses the membrane as a helical span at residues 55 to 76; it reads PMYFLLSQLSIMDTLFICTTVP. The Extracellular segment spans residues 77–97; that stretch reads KLLADMVSKEKIISFVACGIQ. Cysteines 94 and 186 form a disulfide. The helical transmembrane segment at 98-117 threads the bilayer; sequence IFLYLTMIGSEFFLLGLMAY. Topologically, residues 118 to 136 are cytoplasmic; it reads DCYVAVCNPLRYPVLMNRK. The helical transmembrane segment at 137-155 threads the bilayer; that stretch reads KCLLLAAGAWFGGSLDGFL. Residues 156–192 are Extracellular-facing; the sequence is LTPITMNVPYCGSRSINHFFCEIPAVLKLACADTSLY. The chain crosses the membrane as a helical span at residues 193 to 216; sequence ETLMYICCVLMLLIPISIISTSYS. Topologically, residues 217–233 are cytoplasmic; the sequence is LILLTIHRMPSAEGRKK. A helical transmembrane segment spans residues 234–256; the sequence is AFTTCSSHLTVVSIFYGAAFYTY. Topologically, residues 257-269 are extracellular; that stretch reads VLPQSFHTPEQDK. Residues 270-289 form a helical membrane-spanning segment; the sequence is VVSAFYTIVTPMLNPLIYSL. Residues 290–316 are Cytoplasmic-facing; sequence RNKDVIGAFKKVFACCSSAQKVATSDA.

This sequence belongs to the G-protein coupled receptor 1 family.

It is found in the cell membrane. Functionally, odorant receptor. The sequence is that of Olfactory receptor 2T11 (OR2T11) from Homo sapiens (Human).